A 282-amino-acid chain; its full sequence is Parvulin-like PPIase (282 aa).

A signal peptide spans 1 to 20 (MKKLSVIFLSVSMLSSIAFG). The 94-residue stretch at 138 to 231 (KEQIKVAHIL…FGWHIIKVLE (94 aa)) folds into the PpiC domain.

It belongs to the PpiC/parvulin rotamase family.

The protein localises to the cell outer membrane. It carries out the reaction [protein]-peptidylproline (omega=180) = [protein]-peptidylproline (omega=0). The sequence is that of Parvulin-like PPIase (plp) from Rickettsia prowazekii (strain Madrid E).